Here is a 160-residue protein sequence, read N- to C-terminus: MAPALWRACNGLMAAFFALAALVQVNDPDAEVWVVVYTIPAVLTLLVGLNPEVTGNVIWKSISAIHILFCTVWAVGLASYLLHRTQQNILHEEEGRELSGLVIITAWIILCHSSSKNPVGGRIQLAIAIVITLFPFISWVYIYINKEMRSSWPTHCKTVI.

A run of 5 helical transmembrane segments spans residues 3 to 23, 30 to 50, 62 to 82, 100 to 120, and 125 to 145; these read PALWRACNGLMAAFFALAALV, AEVWVVVYTIPAVLTLLVGLN, ISAIHILFCTVWAVGLASYLL, GLVIITAWIILCHSSSKNPVG, and LAIAIVITLFPFISWVYIYIN.

Its subcellular location is the membrane. This Homo sapiens (Human) protein is Transmembrane protein 220 (TMEM220).